The primary structure comprises 249 residues: 5'-nucleotidase SurE (249 aa).

Aspartate 9, aspartate 10, serine 40, and asparagine 92 together coordinate a divalent metal cation.

Belongs to the SurE nucleotidase family. The cofactor is a divalent metal cation.

Its subcellular location is the cytoplasm. The enzyme catalyses a ribonucleoside 5'-phosphate + H2O = a ribonucleoside + phosphate. In terms of biological role, nucleotidase that shows phosphatase activity on nucleoside 5'-monophosphates. The chain is 5'-nucleotidase SurE from Shewanella baltica (strain OS195).